The primary structure comprises 144 residues: Vasopressin-neurophysin 2-copeptin (144 aa).

Cysteines 1 and 6 form a disulfide. At Gly-9 the chain carries Glycine amide. 7 disulfide bridges follow: Cys-22–Cys-66, Cys-25–Cys-39, Cys-33–Cys-56, Cys-40–Cys-46, Cys-73–Cys-85, Cys-79–Cys-97, and Cys-86–Cys-91. The N-linked (GlcNAc...) asparagine glycan is linked to Asn-112.

The protein belongs to the vasopressin/oxytocin family. In terms of assembly, interacts with vasopressin receptors V1bR/AVPR1B (Ki=85 pM), V1aR/AVPR1A (Ki=0.6 nM) and V2R/AVPR2 (Ki=4.9 nM). Interacts with oxytocin receptor (OXTR) (Ki=110 nM).

Its subcellular location is the secreted. Neurophysin 2 specifically binds vasopressin. In terms of biological role, vasopressin has a direct antidiuretic action on the kidney, it also causes vasoconstriction of the peripheral vessels. Acts by binding to vasopressin receptors (V1bR/AVPR1B, V1aR/AVPR1A, and V2R/AVPR2). This Cavia porcellus (Guinea pig) protein is Vasopressin-neurophysin 2-copeptin (AVP).